The chain runs to 490 residues: ATP synthase subunit beta, chloroplastic (490 aa).

An ATP-binding site is contributed by 170-177 (GGAGVGKT).

This sequence belongs to the ATPase alpha/beta chains family. In terms of assembly, F-type ATPases have 2 components, CF(1) - the catalytic core - and CF(0) - the membrane proton channel. CF(1) has five subunits: alpha(3), beta(3), gamma(1), delta(1), epsilon(1). CF(0) has four main subunits: a(1), b(1), b'(1) and c(9-12).

Its subcellular location is the plastid. It is found in the chloroplast thylakoid membrane. It catalyses the reaction ATP + H2O + 4 H(+)(in) = ADP + phosphate + 5 H(+)(out). In terms of biological role, produces ATP from ADP in the presence of a proton gradient across the membrane. The catalytic sites are hosted primarily by the beta subunits. This Pinus koraiensis (Korean pine) protein is ATP synthase subunit beta, chloroplastic.